A 211-amino-acid chain; its full sequence is Probable molybdenum cofactor guanylyltransferase (211 aa).

GTP contacts are provided by residues 21–23 (LAG), Lys33, Asp84, and Asp116. Mg(2+) is bound at residue Asp116.

Belongs to the MobA family. It depends on Mg(2+) as a cofactor.

Its subcellular location is the cytoplasm. The catalysed reaction is Mo-molybdopterin + GTP + H(+) = Mo-molybdopterin guanine dinucleotide + diphosphate. Transfers a GMP moiety from GTP to Mo-molybdopterin (Mo-MPT) cofactor (Moco or molybdenum cofactor) to form Mo-molybdopterin guanine dinucleotide (Mo-MGD) cofactor. The protein is Probable molybdenum cofactor guanylyltransferase of Rhodopirellula baltica (strain DSM 10527 / NCIMB 13988 / SH1).